Consider the following 504-residue polypeptide: Maturase K (504 aa).

The protein belongs to the intron maturase 2 family. MatK subfamily.

The protein localises to the plastid. It is found in the chloroplast. Functionally, usually encoded in the trnK tRNA gene intron. Probably assists in splicing its own and other chloroplast group II introns. The protein is Maturase K of Vigna mungo (Black gram).